The primary structure comprises 225 residues: 2-phytyl-1,4-naphtoquinone methyltransferase (225 aa).

The protein belongs to the class I-like SAM-binding methyltransferase superfamily. MenG/UbiE family.

It catalyses the reaction demethylphylloquinol + S-adenosyl-L-methionine = phylloquinol + S-adenosyl-L-homocysteine + H(+). It participates in cofactor biosynthesis; phylloquinone biosynthesis. Methyltransferase required for the conversion of 2-phytyl-1,4-beta-naphthoquinol to phylloquinol. This Thermosynechococcus vestitus (strain NIES-2133 / IAM M-273 / BP-1) protein is 2-phytyl-1,4-naphtoquinone methyltransferase.